The primary structure comprises 310 residues: Aspartate carbamoyltransferase catalytic subunit (310 aa).

Residues Arg58 and Thr59 each coordinate carbamoyl phosphate. L-aspartate is bound at residue Lys86. Carbamoyl phosphate contacts are provided by Arg108, His136, and Gln139. The L-aspartate site is built by Arg169 and Arg224. Residues Gly265 and Pro266 each coordinate carbamoyl phosphate.

Belongs to the aspartate/ornithine carbamoyltransferase superfamily. ATCase family. As to quaternary structure, heterododecamer (2C3:3R2) of six catalytic PyrB chains organized as two trimers (C3), and six regulatory PyrI chains organized as three dimers (R2).

It carries out the reaction carbamoyl phosphate + L-aspartate = N-carbamoyl-L-aspartate + phosphate + H(+). It participates in pyrimidine metabolism; UMP biosynthesis via de novo pathway; (S)-dihydroorotate from bicarbonate: step 2/3. Its function is as follows. Catalyzes the condensation of carbamoyl phosphate and aspartate to form carbamoyl aspartate and inorganic phosphate, the committed step in the de novo pyrimidine nucleotide biosynthesis pathway. This Geobacter sp. (strain M21) protein is Aspartate carbamoyltransferase catalytic subunit.